The following is a 41-amino-acid chain: GLLGLGYGGYGYGAALAAPAAVSYAAPAIAAAPAVSYAAPA.

Repeat copies occupy residues 17–20 (AAPA), 25–28 (AAPA), 31–34 (AAPA), and 38–41 (AAPA).

Its function is as follows. Component of the cuticle of migratory locust which contains more than 100 different structural proteins. The chain is Cuticle protein 32 from Locusta migratoria (Migratory locust).